Consider the following 356-residue polypeptide: S-adenosylmethionine:tRNA ribosyltransferase-isomerase (356 aa).

The protein belongs to the QueA family. As to quaternary structure, monomer.

Its subcellular location is the cytoplasm. The catalysed reaction is 7-aminomethyl-7-carbaguanosine(34) in tRNA + S-adenosyl-L-methionine = epoxyqueuosine(34) in tRNA + adenine + L-methionine + 2 H(+). It participates in tRNA modification; tRNA-queuosine biosynthesis. Transfers and isomerizes the ribose moiety from AdoMet to the 7-aminomethyl group of 7-deazaguanine (preQ1-tRNA) to give epoxyqueuosine (oQ-tRNA). The sequence is that of S-adenosylmethionine:tRNA ribosyltransferase-isomerase from Escherichia fergusonii (strain ATCC 35469 / DSM 13698 / CCUG 18766 / IAM 14443 / JCM 21226 / LMG 7866 / NBRC 102419 / NCTC 12128 / CDC 0568-73).